The primary structure comprises 441 residues: Cytochrome P450 monooxygenase cpsC (441 aa).

The disordered stretch occupies residues Ser-175 to Gln-195. The segment covering Thr-186–Gln-195 has biased composition (polar residues). Cys-377 is a heme binding site.

The protein belongs to the cytochrome P450 family. Heme is required as a cofactor.

It catalyses the reaction campesine D + reduced [NADPH--hemoprotein reductase] + O2 = campesine G + oxidized [NADPH--hemoprotein reductase] + 2 H2O + H(+). The protein operates within alkaloid biosynthesis. In terms of biological role, cytochrome P450 monooxygenase; part of the gene cluster that mediates the biosynthesis of campesine G, a dimeric indole piperazine alkaloid that shows good insecticidal activity Galleria mellonella. Within the pathway, cpsC catalyzes regioselective dehydrogenation reaction towards C2-N1 of the (2H)-indole ring of campesine D to yield the final product, campesine G. The non-canonical non-ribosomal peptide synthetase cpsA catalyzes the first steps of the pathway by producing L-tryptophanal and L-valinal from their respective amino-acids. These products condensate spontaneously to form trypyl-valyl pyrazine also known as didehydrocampesine A. The NmrA-like family domain-containing oxidoreductase cpsB is the next enzyme in cps pathway and reduces the unstable didehydrocampesine A to campesine A. The methyltransferase cpsF and the acetyltransferase cpsE both recognize N13 of piperazine ring to carry out methylation and acetylation of campesine A to produce campesine C and B, respectively. The cytochrome P450 monooxygenase cpsD then acts as a dimerase that catalyzes oxidative heterocoupling between campesine B and C to produce heterodimers with unexpected 6/5/6/6/6/6/5/6 eight-ring scaffold called campesine D. Finally,the cytochrome P450 monooxygenase cpsC is a regioselective dehydrogenase that catalyzes dehydrogenation reaction towards C2-N1 to produce campesine G. The chain is Cytochrome P450 monooxygenase cpsC from Aspergillus campestris (strain IBT 28561).